Reading from the N-terminus, the 110-residue chain is Putative pterin-4-alpha-carbinolamine dehydratase (110 aa).

This sequence belongs to the pterin-4-alpha-carbinolamine dehydratase family.

It carries out the reaction (4aS,6R)-4a-hydroxy-L-erythro-5,6,7,8-tetrahydrobiopterin = (6R)-L-erythro-6,7-dihydrobiopterin + H2O. The polypeptide is Putative pterin-4-alpha-carbinolamine dehydratase (Vibrio vulnificus (strain CMCP6)).